A 374-amino-acid chain; its full sequence is Ribosomal RNA large subunit methyltransferase G (374 aa).

The protein belongs to the methyltransferase superfamily. RlmG family.

The protein localises to the cytoplasm. It catalyses the reaction guanosine(1835) in 23S rRNA + S-adenosyl-L-methionine = N(2)-methylguanosine(1835) in 23S rRNA + S-adenosyl-L-homocysteine + H(+). Functionally, specifically methylates the guanine in position 1835 (m2G1835) of 23S rRNA. This Pseudomonas putida (strain GB-1) protein is Ribosomal RNA large subunit methyltransferase G.